A 321-amino-acid polypeptide reads, in one-letter code: Peptide transport system permease protein SapB (321 aa).

Transmembrane regions (helical) follow at residues 8–28, 41–61, 82–102, 117–137, 150–170, 180–200, 249–269, and 289–309; these read HILW…VILL, IYIG…GITY, CFIT…ISAV, YVGL…VAAL, LLYE…FMEV, ILQH…MEII, VFTL…WPGI, and VIVI…FTFI. Residues 75 to 303 enclose the ABC transmembrane type-1 domain; it reads LPPTLELCFI…VCIILIDTFT (229 aa).

Belongs to the binding-protein-dependent transport system permease family. OppBC subfamily.

Its subcellular location is the cell inner membrane. Functionally, involved in a peptide intake transport system that plays a role in the resistance to antimicrobial peptides. The polypeptide is Peptide transport system permease protein SapB (sapB) (Haemophilus influenzae (strain ATCC 51907 / DSM 11121 / KW20 / Rd)).